The primary structure comprises 146 residues: Ribosome maturation factor RimP (146 aa).

Belongs to the RimP family.

It is found in the cytoplasm. Functionally, required for maturation of 30S ribosomal subunits. The chain is Ribosome maturation factor RimP from Helicobacter pylori (strain HPAG1).